We begin with the raw amino-acid sequence, 474 residues long: Glutamate--tRNA ligase 1 (474 aa).

Positions 11 to 21 (PSPTGFLHIGG) match the 'HIGH' region motif. Positions 113 to 133 (TARAEGRAPRYDGRWRDRDPS) are enriched in basic and acidic residues. A disordered region spans residues 113-136 (TARAEGRAPRYDGRWRDRDPSEAP). The 'KMSKS' region motif lies at 240 to 244 (KLSKR). Residue Lys-243 coordinates ATP.

This sequence belongs to the class-I aminoacyl-tRNA synthetase family. Glutamate--tRNA ligase type 1 subfamily. As to quaternary structure, monomer.

The protein resides in the cytoplasm. The catalysed reaction is tRNA(Glu) + L-glutamate + ATP = L-glutamyl-tRNA(Glu) + AMP + diphosphate. Catalyzes the attachment of glutamate to tRNA(Glu) in a two-step reaction: glutamate is first activated by ATP to form Glu-AMP and then transferred to the acceptor end of tRNA(Glu). The polypeptide is Glutamate--tRNA ligase 1 (Methylorubrum extorquens (strain PA1) (Methylobacterium extorquens)).